Here is a 543-residue protein sequence, read N- to C-terminus: MTLIQDAELKPRMGSFKKRSSSKNLRYSMTKRRRSSKVMSVEIIEDVHDAEELKAVDAFRQSLILDELLPEKHDDYHMMLRFLKARKFDLEKTKQMWTEMLRWRKEFGADTVMEEFDFKEIDEVLKYYPQGHHGVDKEGRPVYIERLGLVDSTKLMQVTTMDRYVNYHVMEFERTFNVKFPACSIAAKKHIDQSTTILDVQGVGLKNFNKAARDLITRLQKVDGDNYPETLNRMFIINAGSGFRMLWNTVKSFLDPKTTAKIHVLGNKYQSKLLEIIDESELPEFLGGSCTCADNGGCMRSDKGPWKNPEIMKRVHNGDHKCSKGSQAENSGEKTIPEEDDSTTEPASEEEKASKEVEIVPAAHPAWNMPEAHKFSLSKKEVYAIQEACNNATTEGGRSPIFTGVMALVMGVVTMIKVTKNVPRKLTESTLYSSPVYCDDASMNKSAMQSEKMTVPAISGEDFMAIMKRMAELEQKVTVLSAQPTVMPPDKEEMLNAAISRSNVLEQELAATKKALDDSLGRQEELVAYIEKKKKKKKLFNYW.

The 175-residue stretch at 120–294 (EIDEVLKYYP…FLGGSCTCAD (175 aa)) folds into the CRAL-TRIO domain. Positions 316-356 (HNGDHKCSKGSQAENSGEKTIPEEDDSTTEPASEEEKASKE) are disordered. The stretch at 490–526 (DKEEMLNAAISRSNVLEQELAATKKALDDSLGRQEEL) forms a coiled coil.

The protein belongs to the SFH family. In terms of tissue distribution, specifically expressed in flowers.

It localises to the golgi apparatus membrane. The protein resides in the cell membrane. Required for transport of secretory proteins from the Golgi complex. Catalyzes the transfer of phosphatidylinositol and phosphatidylcholine between membranes in vitro. This is Phosphatidylinositol/phosphatidylcholine transfer protein SFH12 (SFH12) from Arabidopsis thaliana (Mouse-ear cress).